The chain runs to 442 residues: tRNA-2-methylthio-N(6)-dimethylallyladenosine synthase (442 aa).

Positions 2-120 (KKVFIRTFGC…LPKMIVDKET (119 aa)) constitute an MTTase N-terminal domain. [4Fe-4S] cluster-binding residues include C11, C49, C83, C157, C161, and C164. The region spanning 143-375 (RVEGGAAFVS…NEVIEAETAR (233 aa)) is the Radical SAM core domain. A TRAM domain is found at 378–441 (QTMIGTVQRC…TFSLRGKVVE (64 aa)).

Belongs to the methylthiotransferase family. MiaB subfamily. Monomer. Requires [4Fe-4S] cluster as cofactor.

It is found in the cytoplasm. It carries out the reaction N(6)-dimethylallyladenosine(37) in tRNA + (sulfur carrier)-SH + AH2 + 2 S-adenosyl-L-methionine = 2-methylsulfanyl-N(6)-dimethylallyladenosine(37) in tRNA + (sulfur carrier)-H + 5'-deoxyadenosine + L-methionine + A + S-adenosyl-L-homocysteine + 2 H(+). Catalyzes the methylthiolation of N6-(dimethylallyl)adenosine (i(6)A), leading to the formation of 2-methylthio-N6-(dimethylallyl)adenosine (ms(2)i(6)A) at position 37 in tRNAs that read codons beginning with uridine. The protein is tRNA-2-methylthio-N(6)-dimethylallyladenosine synthase of Neisseria meningitidis serogroup C (strain 053442).